The primary structure comprises 209 residues: Uracil phosphoribosyltransferase (209 aa).

5-phospho-alpha-D-ribose 1-diphosphate is bound by residues Arg-79, Arg-104, and 131–139 (DPMLATGGS). Residues Ile-194 and 199–201 (GDA) each bind uracil. Asp-200 is a binding site for 5-phospho-alpha-D-ribose 1-diphosphate.

This sequence belongs to the UPRTase family. Mg(2+) is required as a cofactor.

The enzyme catalyses UMP + diphosphate = 5-phospho-alpha-D-ribose 1-diphosphate + uracil. It participates in pyrimidine metabolism; UMP biosynthesis via salvage pathway; UMP from uracil: step 1/1. Its activity is regulated as follows. Allosterically activated by GTP. Catalyzes the conversion of uracil and 5-phospho-alpha-D-ribose 1-diphosphate (PRPP) to UMP and diphosphate. The polypeptide is Uracil phosphoribosyltransferase (Citrifermentans bemidjiense (strain ATCC BAA-1014 / DSM 16622 / JCM 12645 / Bem) (Geobacter bemidjiensis)).